The following is a 117-amino-acid chain: MAQYRREMLESEMKKLITQGFSQLKDPRLKDKFIDINMVRLSKDKSYLDVYVSSLDEDIDTIINILNNAKGMFRTLIAKNIKMFKVPEVRFHKDEGIEASIRINKLIEKIEKNEEGK.

It belongs to the RbfA family. As to quaternary structure, monomer. Binds 30S ribosomal subunits, but not 50S ribosomal subunits or 70S ribosomes.

It is found in the cytoplasm. In terms of biological role, one of several proteins that assist in the late maturation steps of the functional core of the 30S ribosomal subunit. Associates with free 30S ribosomal subunits (but not with 30S subunits that are part of 70S ribosomes or polysomes). Required for efficient processing of 16S rRNA. May interact with the 5'-terminal helix region of 16S rRNA. This Petrotoga mobilis (strain DSM 10674 / SJ95) protein is Ribosome-binding factor A.